Reading from the N-terminus, the 180-residue chain is Transcription factor IBH1-like 1 (180 aa).

In terms of domain architecture, bHLH spans 110–160 (KSKSASEEAAAKAKRLVKRRTQGLRNVVPGGELMSNDVLLLQETLDYIVSL).

Belongs to the bHLH protein family.

The protein resides in the nucleus. Functionally, functions redundandly with IBH1/BHLH158 in a regulation node known as the incoherent feed-forward loop (FFL). Acts as transcriptional repressor that negatively regulates cell and organ elongation in response to gibberellin (GA) and brassinosteroid (BR) signaling. This is Transcription factor IBH1-like 1 from Arabidopsis thaliana (Mouse-ear cress).